Here is a 218-residue protein sequence, read N- to C-terminus: Uridine kinase (218 aa).

16 to 23 contacts ATP; sequence GGSGSGKT.

This sequence belongs to the uridine kinase family.

It localises to the cytoplasm. The enzyme catalyses uridine + ATP = UMP + ADP + H(+). It catalyses the reaction cytidine + ATP = CMP + ADP + H(+). The protein operates within pyrimidine metabolism; CTP biosynthesis via salvage pathway; CTP from cytidine: step 1/3. It functions in the pathway pyrimidine metabolism; UMP biosynthesis via salvage pathway; UMP from uridine: step 1/1. This Limosilactobacillus reuteri (strain DSM 20016) (Lactobacillus reuteri) protein is Uridine kinase.